Here is a 505-residue protein sequence, read N- to C-terminus: L-carnitine/gamma-butyrobetaine antiporter (505 aa).

12 helical membrane-spanning segments follow: residues 10 to 30 (IEPK…WLTV), 51 to 71 (WGWA…WLVF), 92 to 112 (IFMM…SIEI), 143 to 163 (GPLP…FFFV), 195 to 215 (FYLV…TPLV), 231 to 251 (LDAI…ACGL), 263 to 283 (SYLS…SFIM), 316 to 336 (WTVF…IFLA), 347 to 367 (LCFG…TVLG), 403 to 423 (LSTA…VTLI), 446 to 466 (LLVR…LLAL), and 475 to 495 (AIIA…LSFI).

This sequence belongs to the BCCT transporter (TC 2.A.15) family. CaiT subfamily. In terms of assembly, homotrimer.

It is found in the cell inner membrane. The catalysed reaction is 4-(trimethylamino)butanoate(in) + (R)-carnitine(out) = 4-(trimethylamino)butanoate(out) + (R)-carnitine(in). It functions in the pathway amine and polyamine metabolism; carnitine metabolism. Its function is as follows. Catalyzes the exchange of L-carnitine for gamma-butyrobetaine. The chain is L-carnitine/gamma-butyrobetaine antiporter from Salmonella agona (strain SL483).